The sequence spans 265 residues: 5'-nucleotidase SurE (265 aa).

4 residues coordinate a divalent metal cation: Asp12, Asp13, Ser43, and Asn91.

Belongs to the SurE nucleotidase family. The cofactor is a divalent metal cation.

It is found in the cytoplasm. The enzyme catalyses a ribonucleoside 5'-phosphate + H2O = a ribonucleoside + phosphate. Nucleotidase that shows phosphatase activity on nucleoside 5'-monophosphates. This is 5'-nucleotidase SurE from Haloquadratum walsbyi (strain DSM 16790 / HBSQ001).